Consider the following 433-residue polypeptide: T-box transcription factor T (433 aa).

The T-box DNA-binding region spans 49–217 (LWLRFKELTN…YNPFAKAFLD (169 aa)).

Monomer. Binds DNA as a monomer.

Its subcellular location is the nucleus. Its function is as follows. Involved in the transcriptional regulation of genes required for mesoderm formation and differentiation. Binds to a palindromic site (called T site) and activates gene transcription when bound to such a site. The sequence is that of T-box transcription factor T from Gallus gallus (Chicken).